The following is a 145-amino-acid chain: Ribonuclease H (145 aa).

One can recognise an RNase H type-1 domain in the interval 1-141 (MQEVELFTDG…VDELANQAMD (141 aa)). Mg(2+)-binding residues include aspartate 9, glutamate 47, aspartate 69, and aspartate 133.

It belongs to the RNase H family. As to quaternary structure, monomer. It depends on Mg(2+) as a cofactor.

It is found in the cytoplasm. It carries out the reaction Endonucleolytic cleavage to 5'-phosphomonoester.. Functionally, endonuclease that specifically degrades the RNA of RNA-DNA hybrids. This is Ribonuclease H from Hydrogenovibrio crunogenus (strain DSM 25203 / XCL-2) (Thiomicrospira crunogena).